A 153-amino-acid chain; its full sequence is MTRVVAQGTFDLLHPGHVHYLEDAATYGDELHAIVARRTNVTHKPAPILCAEQRRDMVAALTAVDEAHLGHPEDVFVPIQRLDPDVIVLGFDQHHDEADIAAALAERGIDCRVERASGRDPRYEDELLSSGDIVDRILKQRGSDCDGAREGQR.

ATP-binding positions include 9–10 (TF), 14–17 (HPGH), and Asp92.

The protein belongs to the archaeal FAD synthase family. In terms of assembly, homodimer. A divalent metal cation serves as cofactor.

It catalyses the reaction FMN + ATP + H(+) = FAD + diphosphate. Its pathway is cofactor biosynthesis; FAD biosynthesis; FAD from FMN: step 1/1. Its function is as follows. Catalyzes the transfer of the AMP portion of ATP to flavin mononucleotide (FMN) to produce flavin adenine dinucleotide (FAD) coenzyme. The polypeptide is FAD synthase (Halorubrum lacusprofundi (strain ATCC 49239 / DSM 5036 / JCM 8891 / ACAM 34)).